Consider the following 829-residue polypeptide: UBA domain-containing protein 8 (829 aa).

An EH 1 domain is found at 10–109 (EQQEFDRLLE…KQAKDDHHIK (100 aa)). Positions 43–78 (LPQKILAKIWDYCDQEDKGSLDRNQVYACFRLISQA) constitute an EF-hand 1 domain. A disordered region spans residues 93–121 (GDPPILPKQAKDDHHIKRSSSETADFTPF). Serine 112 and serine 113 each carry phosphoserine. 2 EH domains span residues 129–225 (ERSE…AKSE) and 300–398 (DRSN…SDDT). One can recognise an EF-hand 2 domain in the interval 333–368 (LDSEELARIWDTVDTQDRGYIDKDEFAVAMEIIKLR). Polar residues-rich tracts occupy residues 466–506 (SFQD…TQSI) and 574–590 (TIPG…QTTE). Disordered regions lie at residues 466–520 (SFQD…VNSS), 574–614 (TIPG…MRKL), and 724–785 (KPQV…QSYE). A coiled-coil region spans residues 602-709 (EPTEEEQEEM…AKIDSIIADS (108 aa)). The span at 728 to 737 (TPAPPTPAPT) shows a compositional bias: pro residues. Positions 764 to 774 (HANSSTPMNYV) are enriched in polar residues. Over residues 775–785 (SQPESPPQSYE) the composition is skewed to low complexity. A UBA domain is found at 788–828 (QNDNELLQELLSMGFPREKAVIALEATNYDVNEAANILLSS).

In Schizosaccharomyces pombe (strain 972 / ATCC 24843) (Fission yeast), this protein is UBA domain-containing protein 8 (ucp8).